The sequence spans 286 residues: MRYIRLCIISLLATLPLAVHASPQPLEQIKLSESQLSGRVGMIEMDLASGRTLTAWRADERFPMMSTFKVVLCGAVLARVDAGDEQLERKIHYRQQDLVDYSPVSEKHLADGMTVGELCAAAITMSDNSAANLLLATVGGPAGLTAFLRQIGDNVTRLDRWETELNEALPGDARDTTTPASMAATLRKLLNSQRLSARSQRQLLQWMVDDRVAGPLIRSVLPAGWFIADKTGASKRGARGIVALLGPNNKAERIVVIYLRDTPASMAERNQQIAGIGAALIEHWQR.

A signal peptide spans 1–21 (MRYIRLCIISLLATLPLAVHA). The Acyl-ester intermediate role is filled by S66. Cysteines 73 and 119 form a disulfide. The active-site Proton acceptor is E164. 230 to 232 (KTG) serves as a coordination point for substrate.

It belongs to the class-A beta-lactamase family.

The enzyme catalyses a beta-lactam + H2O = a substituted beta-amino acid. The chain is Beta-lactamase SHV-46 (bla) from Klebsiella oxytoca.